A 203-amino-acid chain; its full sequence is Large ribosomal subunit protein bL25 (203 aa).

It belongs to the bacterial ribosomal protein bL25 family. CTC subfamily. As to quaternary structure, part of the 50S ribosomal subunit; part of the 5S rRNA/L5/L18/L25 subcomplex. Contacts the 5S rRNA. Binds to the 5S rRNA independently of L5 and L18.

Functionally, this is one of the proteins that binds to the 5S RNA in the ribosome where it forms part of the central protuberance. In Pseudomonas syringae pv. tomato (strain ATCC BAA-871 / DC3000), this protein is Large ribosomal subunit protein bL25.